We begin with the raw amino-acid sequence, 82 residues long: RNA-binding protein TTE2299 (82 aa).

It belongs to the eukaryotic ribosomal protein eL8 family.

This chain is RNA-binding protein TTE2299, found in Caldanaerobacter subterraneus subsp. tengcongensis (strain DSM 15242 / JCM 11007 / NBRC 100824 / MB4) (Thermoanaerobacter tengcongensis).